The following is a 202-amino-acid chain: MITDFLLAFSILAVSTTLGVSNLNKQCRDLLQCSIQKKCVNLPVLSKLVDGKNISAEMYDDIDKYTDYGCIFTTGCQDECNDCPLCLTSKLQIVDILSGEKSSAECPTLMDCALKCVAESNQDIFQINKCLRQDCAFHCFDGSCPKCSGFITRVFNQMCAAGNFRQKIKGYSGPCYEMFHEIVRAKFADRFEKNGKTRGHSG.

Residues 1 to 6 (MITDFL) lie on the Cytoplasmic side of the membrane. Residues 7-23 (LAFSILAVSTTLGVSNL) traverse the membrane as a helical; Signal-anchor for type II membrane protein segment. At 24–202 (NKQCRDLLQC…KNGKTRGHSG (179 aa)) the chain is on the extracellular side. An N-linked (GlcNAc...) asparagine glycan is attached at Asn-53.

It is found in the membrane. This is an uncharacterized protein from Caenorhabditis elegans.